We begin with the raw amino-acid sequence, 362 residues long: MGKIHRPRKGSLAFSPRKRAKSIVPRIRSWPKETEVRMLGFAGYKAGMTHILMIDDEPGLTNGKEIFMPVTIIETPPLRVFGIRAYRQGYLGLETAGEVIVPDFELDNYTPSKKGKGRKFTFYQFLGRRIATLPKDYTQEEFEQKLGALEDMIKEGEIVEVRALVSTQPWVIKLKKKPEVMEYAIGGTSVEEKFNYIKEKLGKEIRVGEVLKEGELLDVIAVTKGKGTQGPVKRWGIKLRAHKDSKGRRKVGSIGPWHPARVMWTVPMAGQMGFHHRTELNKRLIAIGENGKLVIDGNEIEITPKGGFPHYGIVRGDFMMIAGSVPGAIKRIIRVRPAIRPPKKKPPVQRPQITYVSVESKQ.

A disordered region spans residues 340–362; the sequence is RPPKKKPPVQRPQITYVSVESKQ. Positions 351–362 are enriched in polar residues; that stretch reads PQITYVSVESKQ.

This sequence belongs to the universal ribosomal protein uL3 family. As to quaternary structure, part of the 50S ribosomal subunit. Forms a cluster with proteins L14 and L24e.

In terms of biological role, one of the primary rRNA binding proteins, it binds directly near the 3'-end of the 23S rRNA, where it nucleates assembly of the 50S subunit. The protein is Large ribosomal subunit protein uL3 of Pyrococcus horikoshii (strain ATCC 700860 / DSM 12428 / JCM 9974 / NBRC 100139 / OT-3).